A 241-amino-acid polypeptide reads, in one-letter code: Tetraspanin-1 (241 aa).

The Cytoplasmic portion of the chain corresponds to 1 to 11 (MGCFNFIKVMM). Residues 12-32 (ILFNMLIFLCGAALLAVGIWV) form a helical membrane-spanning segment. The Extracellular portion of the chain corresponds to 33 to 52 (SVDGPSFVKIFGPMSSSAMQ). Residues 53–73 (FVNVGYFLIAAGAVLFALGFL) form a helical membrane-spanning segment. Topologically, residues 74–88 (GCYGAQTESKCALMT) are cytoplasmic. A helical transmembrane segment spans residues 89 to 109 (FFFILLLIFIAEVAAAVVALV). At 110 to 211 (YTTLAENFLT…KQLLYDIRTN (102 aa)) the chain is on the extracellular side. N-linked (GlcNAc...) asparagine glycans are attached at residues Asn-141, Asn-154, Asn-167, Asn-180, Asn-189, and Asn-194. Residues 212-232 (AVTVGGVAAGIGGLELAAMIV) form a helical membrane-spanning segment. Residues 233-241 (SMYLYCNLE) lie on the Cytoplasmic side of the membrane.

Belongs to the tetraspanin (TM4SF) family. Interacts with SLC19A2. Interacts with NTRK1/TRKA.

It is found in the lysosome membrane. In terms of biological role, structural component of specialized membrane microdomains known as tetraspanin-enriched microdomains (TERMs), which act as platforms for receptor clustering and signaling. Participates thereby in diverse biological functions such as cell signal transduction, adhesion, migration and protein trafficking. Regulates neuronal differentiation in response to NGF by facilitating NGF-mediated activation of NTRK1/TRKA receptor tyrosine kinase and subsequent downstream signaling pathways. Plays a role in the inhibition of TNFalpha-induced apoptosis. Mechanistically, inhibits the NF-kappa-B signaling pathway by blocking phosphorylation of CHUK. Also promotes the stability of the thiamine transporter 1/SLC19A2 in intestinal epithelial cells leading to an increase of thiamine uptake process. The sequence is that of Tetraspanin-1 (TSPAN1) from Bos taurus (Bovine).